The following is a 327-amino-acid chain: tRNA U34 carboxymethyltransferase (327 aa).

Residues Lys91, Trp105, Lys110, Gly130, 181-182 (IE), Met196, Tyr200, and Arg315 each bind carboxy-S-adenosyl-L-methionine.

It belongs to the class I-like SAM-binding methyltransferase superfamily. CmoB family. In terms of assembly, homotetramer.

The catalysed reaction is carboxy-S-adenosyl-L-methionine + 5-hydroxyuridine(34) in tRNA = 5-carboxymethoxyuridine(34) in tRNA + S-adenosyl-L-homocysteine + H(+). Catalyzes carboxymethyl transfer from carboxy-S-adenosyl-L-methionine (Cx-SAM) to 5-hydroxyuridine (ho5U) to form 5-carboxymethoxyuridine (cmo5U) at position 34 in tRNAs. The sequence is that of tRNA U34 carboxymethyltransferase from Pectobacterium atrosepticum (strain SCRI 1043 / ATCC BAA-672) (Erwinia carotovora subsp. atroseptica).